The primary structure comprises 43 residues: Protein PsbN (43 aa).

A helical transmembrane segment spans residues 4-24 (GILVVIFISCLLVSFTGYTIY).

Belongs to the PsbN family.

It localises to the plastid. Its subcellular location is the chloroplast thylakoid membrane. May play a role in photosystem I and II biogenesis. The sequence is that of Protein PsbN from Chaetosphaeridium globosum (Charophycean green alga).